Consider the following 141-residue polypeptide: Cystatin-13 (141 aa).

Positions 1 to 24 are cleaved as a signal peptide; it reads MARFLQTLLFLVIMVEFVSRRVEA. The tract at residues 76 to 80 is secondary area of contact; it reads QITDS. 2 cysteine pairs are disulfide-bonded: Cys94/Cys104 and Cys118/Cys138.

Belongs to the cystatin family. As to expression, expressed exclusively in testis. Found in spermatagonia, spermatocytes, round spermatids, elongating spermatids and spermatozoa.

It localises to the secreted. The protein localises to the cytoplasm. Functionally, may perform a specialized role during sperm development and maturation. In Mus musculus (Mouse), this protein is Cystatin-13.